A 497-amino-acid chain; its full sequence is Iron-sulfur cluster assembly factor IBA57, mitochondrial (497 aa).

A mitochondrion-targeting transit peptide spans 1 to 27 (MFISRRCRIKGFTLKNLLWFRSSSTRF). A disordered region spans residues 414–433 (PTLNPFTNKPPERTKRKQRP).

It belongs to the GcvT family. CAF17/IBA57 subfamily. In terms of assembly, interacts with CCR4, ISA1 and ISA2.

The protein localises to the mitochondrion matrix. Required for lysine and glutamate prototrophy and mitochondrial genome maintenance. Has a role in the maturation of mitochondrial aconitase-type and radical-SAM Fe/S proteins biotin synthase and lipoic acid synthase. The chain is Iron-sulfur cluster assembly factor IBA57, mitochondrial from Saccharomyces cerevisiae (strain ATCC 204508 / S288c) (Baker's yeast).